The sequence spans 263 residues: MFQFELKKWIQKLNSTLSLFVSLLARLRTMKINTSSLAEQIYLVGPGSLNITLLTACFISMVFTMQIAKEFLHLDAASALGAVIVIAFTRELSPVLTAVIIAGKIGSSFTAEIATMETTEQIDALYLLNTNPIDYLVFPKVAACCIMLPILSTISLTASIAISIFVSFVMYGIPSSIFLKSAFLALSVSDFFSCLQKSLCFGTIIAFISCQWGLTSSGGAKGVGNSTTSSVVTILLTIFITDFILSYFMFQSTGSSIAQGNNL.

6 helical membrane passes run Leu-43 to Phe-63, Ala-82 to Ala-102, Leu-136 to Leu-156, Ser-159 to Leu-179, Leu-199 to Gly-219, and Ser-230 to Phe-250.

It belongs to the MlaE permease family.

The protein resides in the plastid. It is found in the chloroplast membrane. Could be part of an ABC transporter complex. In Porphyra purpurea (Red seaweed), this protein is Probable ABC transporter permease protein ycf63 (ycf63).